The following is an 84-amino-acid chain: Inactive transposase YbfQ (84 aa).

The protein is Inactive transposase YbfQ (ybfQ) of Escherichia coli (strain K12).